A 166-amino-acid chain; its full sequence is Small ribosomal subunit protein uS5 (166 aa).

The region spanning 12 to 75 is the S5 DRBM domain; sequence YIEKLVQVNR…EAARRNMIQV (64 aa).

This sequence belongs to the universal ribosomal protein uS5 family. In terms of assembly, part of the 30S ribosomal subunit. Contacts proteins S4 and S8.

In terms of biological role, with S4 and S12 plays an important role in translational accuracy. Located at the back of the 30S subunit body where it stabilizes the conformation of the head with respect to the body. This is Small ribosomal subunit protein uS5 from Pseudomonas fluorescens (strain ATCC BAA-477 / NRRL B-23932 / Pf-5).